A 578-amino-acid polypeptide reads, in one-letter code: NADPH oxidase 4 (578 aa).

The Cytoplasmic segment spans residues 1-16; sequence MALSWRSWLANEGVKH. Residues 17-37 traverse the membrane as a helical segment; that stretch reads LCLLVWLSLNVLLFWKTFLLY. Over 38 to 62 the chain is Extracellular; it reads NQGPEYYYIHQMLGLGLCLSRASAS. The 246-residue stretch at 58 to 303 folds into the Ferric oxidoreductase domain; sequence RASASVLNLN…YCAERLYRCI (246 aa). A helical membrane pass occupies residues 63 to 83; sequence VLNLNCSLILLPMCRTVLAYL. Over 84 to 104 the chain is Cytoplasmic; that stretch reads RGSQKVPSRRTRRLLDKSKTL. The helical transmembrane segment at 105-125 threads the bilayer; it reads HITCGITICIFSGVHVAAHLV. The Extracellular segment spans residues 126–154; sequence NALNFSVNYSEHFLALNAARYQNEDPRKL. Asn-133 carries an N-linked (GlcNAc...) asparagine glycan. Residues 155–175 form a helical membrane-spanning segment; sequence LFTTVPGLTGVCMVVVLFLMV. The Cytoplasmic portion of the chain corresponds to 176–188; it reads TASTYAIRVSNYD. The chain crosses the membrane as a helical span at residues 189–209; the sequence is IFWYTHNLFFVFYMLLLLHVS. Over 210–424 the chain is Extracellular; sequence GGLLKYQTNL…SPFEESLNYE (215 aa). Residues 218 to 273 form an E-loop; essential for H2O2 generating catalytic activity region; sequence NLDTHPPGCISLNRTPSQNMSIADYVSEHFHGSLPGGFSKLEDHYQKTLVKICLEE. A mediates interaction with TLR4 region spans residues 248–575; it reads HGSLPGGFSK…YGTKFEYNKE (328 aa). The region spanning 304–419 is the FAD-binding FR-type domain; the sequence is RSNKPVTIIS…DGPFGSPFEE (116 aa). Residues 425–445 form a helical membrane-spanning segment; sequence VSLCVAGGIGVTPFASILNTL. At 446-578 the chain is on the cytoplasmic side; sequence LDDWKPYKLR…KFEYNKESFS (133 aa).

As to quaternary structure, interacts with TLR4. Interacts with, relocalizes and stabilizes CYBA/p22phox. Interacts with protein disulfide isomerase. Interacts with PPP1R15A. Interacts with LRRC8A; this interaction prevents the ubiquitin-mediated degradation of LRRC8A. Heme is required as a cofactor. In terms of processing, N-glycosylation is required for the function. As to expression, expressed in vascular smooth muscle.

The protein resides in the cytoplasm. The protein localises to the endoplasmic reticulum membrane. It localises to the cell membrane. It is found in the cell junction. Its subcellular location is the focal adhesion. The protein resides in the nucleus. The catalysed reaction is NADPH + 2 O2 = 2 superoxide + NADP(+) + H(+). It carries out the reaction NADPH + O2 + H(+) = H2O2 + NADP(+). Its activity is regulated as follows. Activated by insulin. Inhibited by diphenylene iodonium. Inhibited by plumbagin. Activated by phorbol 12-myristate 13-acetate (PMA). NADPH oxidase that catalyzes predominantly the reduction of oxygen to H2O2. Can also catalyze to a smaller extent, the reduction of oxygen to superoxide. May function as an oxygen sensor regulating the KCNK3/TASK-1 potassium channel and HIF1A activity. May regulate insulin signaling cascade. May play a role in apoptosis, bone resorption and lipolysaccharide-mediated activation of NFKB. May produce superoxide in the nucleus and play a role in regulating gene expression upon cell stimulation. Promotes ferroptosis, reactive oxygen species production and reduced glutathione (GSH) levels by activating NLRP3 inflammasome activation and cytokine release. The protein is NADPH oxidase 4 (Nox4) of Rattus norvegicus (Rat).